The sequence spans 339 residues: Putative agmatine deiminase (339 aa).

The active-site Amidino-cysteine intermediate is C331.

Belongs to the agmatine deiminase family.

The enzyme catalyses agmatine + H2O = N-carbamoylputrescine + NH4(+). This Streptomyces coelicolor (strain ATCC BAA-471 / A3(2) / M145) protein is Putative agmatine deiminase.